Reading from the N-terminus, the 649-residue chain is Threonine--tRNA ligase (649 aa).

The 60-residue stretch at 1–60 folds into the TGS domain; the sequence is MHVTLPDGKQLDLQAGATALDVARALGPRLAQDALAALVNGELMDLMTPLPEGAQVRLIT. The catalytic stretch occupies residues 248–544; it reads DHRKLGRELE…LIEHYGGDFP (297 aa). Positions 341, 392, and 521 each coordinate Zn(2+).

The protein belongs to the class-II aminoacyl-tRNA synthetase family. In terms of assembly, homodimer. Zn(2+) is required as a cofactor.

It is found in the cytoplasm. It catalyses the reaction tRNA(Thr) + L-threonine + ATP = L-threonyl-tRNA(Thr) + AMP + diphosphate + H(+). Catalyzes the attachment of threonine to tRNA(Thr) in a two-step reaction: L-threonine is first activated by ATP to form Thr-AMP and then transferred to the acceptor end of tRNA(Thr). Also edits incorrectly charged L-seryl-tRNA(Thr). In Deinococcus geothermalis (strain DSM 11300 / CIP 105573 / AG-3a), this protein is Threonine--tRNA ligase.